The following is a 564-amino-acid chain: MRLSEFHLHTTKEIPADAELVSHRLMLRAGMIRKLASGLYTWSPLGLRVLRKVEAIVRDEMNRAGAVEMLLPTIQPRELWEESERWEKFGSQLLKIKDRKQAEYCYSPTAEEAVTDYVRQELTSYKQLPVNLYQIQTKFRDEIRPRFGVMRAREFVMKDAYSFHLNDADLVREYENMRATYTRIFTRLGLEFRAVQADSGAIGGDASQEFHVIADSGEDVLAFSTGSDYAANIEAAIAATPGPRLTANETLQKVSTPTQKRCEDVAALLDIPLQRVVKSIAVMTDSGFFLALLRGDHTLNDIKLSKLPGLANFRLANEVEIARHLGSEPGFLGPVCPGMPIRIIADCEVAVMADFVVGANEVGFHLVGVNWGRDLPEPEVVADIRNVIEGDRAVDGGKICIARGIEVGHVFQLGRKYAEAMKATVLDEYGKAVTMTMGCYGIGVSRIVAAAIEQNHDVAGIIWPAPIAPWQVAVCVINPKKDPVITAAAEMLLAELQSADVDTVLDDRGLRPGVMFADMELIGIPHRIVVSERGLAAGTYEYRARRTAMVENLDKTTLLTRIKA.

Belongs to the class-II aminoacyl-tRNA synthetase family. ProS type 1 subfamily. In terms of assembly, homodimer.

It localises to the cytoplasm. It catalyses the reaction tRNA(Pro) + L-proline + ATP = L-prolyl-tRNA(Pro) + AMP + diphosphate. Functionally, catalyzes the attachment of proline to tRNA(Pro) in a two-step reaction: proline is first activated by ATP to form Pro-AMP and then transferred to the acceptor end of tRNA(Pro). As ProRS can inadvertently accommodate and process non-cognate amino acids such as alanine and cysteine, to avoid such errors it has two additional distinct editing activities against alanine. One activity is designated as 'pretransfer' editing and involves the tRNA(Pro)-independent hydrolysis of activated Ala-AMP. The other activity is designated 'posttransfer' editing and involves deacylation of mischarged Ala-tRNA(Pro). The misacylated Cys-tRNA(Pro) is not edited by ProRS. This Xylella fastidiosa (strain Temecula1 / ATCC 700964) protein is Proline--tRNA ligase.